Reading from the N-terminus, the 131-residue chain is C-glycoside deglycosidase beta subunit (131 aa).

The protein belongs to the C-glycoside deglycosidase beta subunit family. Heterodimer composed of an alpha subunit (CarB1) and a beta subunit (CarC1). Requires Mg(2+) as cofactor.

It carries out the reaction 3''-dehydroisovitexin = 1,5-anhydro-D-erythro-hex-1-en-3-ulose + apigenin. With respect to regulation, activity is strongly reduced in the presence of chelating agents. Functionally, carbon-carbon bond-cleaving enzyme which participates in the metabolism of C-glycosides. Acts on the C6-glycosylated compound 3''-dehydroisovitexin (3''-oxo-isovitexin). Shows weak activity with 3''-dehydroisoorientin (3''-oxo-homoorientin) and 3'-dehydromangiferin (3'-oxo-mangiferin). The protein is C-glycoside deglycosidase beta subunit of Arthrobacter globiformis (strain ATCC 8010 / DSM 20124 / JCM 1332 / NBRC 12137 / NCIMB 8907 / NRRL B-2979 / 168).